The following is a 425-amino-acid chain: Trigger factor (425 aa).

One can recognise a PPIase FKBP-type domain in the interval 158-231 (GDLVRVNMEV…VEEVYKRTLP (74 aa)).

It belongs to the FKBP-type PPIase family. Tig subfamily.

It is found in the cytoplasm. It catalyses the reaction [protein]-peptidylproline (omega=180) = [protein]-peptidylproline (omega=0). Involved in protein export. Acts as a chaperone by maintaining the newly synthesized protein in an open conformation. Functions as a peptidyl-prolyl cis-trans isomerase. This Thermotoga maritima (strain ATCC 43589 / DSM 3109 / JCM 10099 / NBRC 100826 / MSB8) protein is Trigger factor (tig).